Consider the following 847-residue polypeptide: Rho GTPase-activating protein 12 (847 aa).

One can recognise an SH3 domain in the interval 12–74 (PGQAYIEVEY…PAQYVKEVTR (63 aa)). The segment at 110–241 (LPELSSFGKP…PPNQGRPDSP (132 aa)) is disordered. 2 stretches are compositionally biased toward polar residues: residues 117-174 (GKPS…QNRT) and 191-200 (TSFSQEQSCD). The residue at position 165 (serine 165) is a Phosphoserine. Phosphoserine is present on residues serine 201, serine 213, and serine 215. Polar residues predominate over residues 224 to 234 (TEQIRATTPPN). Threonine 230 and threonine 231 each carry phosphothreonine. Serine 240 is subject to Phosphoserine. Tyrosine 243 carries the post-translational modification Phosphotyrosine. WW domains lie at 265 to 298 (IQIN…PPRW) and 358 to 391 (DYTN…LPKY). Positions 293 to 317 (WKPPRWTRDASISKGDFQSPGDQEL) are disordered. 2 disordered regions span residues 428-466 (DTND…DQEK) and 591-625 (PDSP…SEQK). Residues 445 to 461 (NESSPSSPKHQDTASSP) show a composition bias toward polar residues. The PH domain maps to 463–575 (DQEKYGLLNV…WFKVLSSTIN (113 aa)). The residue at position 593 (serine 593) is a Phosphoserine. A compositionally biased stretch (basic and acidic residues) spans 595–610 (GIEKHDKEKEQKDPKK). In terms of domain architecture, Rho-GAP spans 657–845 (SNLANLCQRE…LILLELSSIF (189 aa)).

Its function is as follows. GTPase activator for the Rho-type GTPases by converting them to an inactive GDP-bound state. This chain is Rho GTPase-activating protein 12 (ARHGAP12), found in Macaca fascicularis (Crab-eating macaque).